The chain runs to 328 residues: Putative tyrosine-protein kinase C03B1.5 (328 aa).

Residues 25 to 288 form the Protein kinase domain; that stretch reads WSPALKIGSG…ALHASSQTYL (264 aa). Residues 31 to 39 and K62 contribute to the ATP site; that span reads IGSGAFGEV. D155 functions as the Proton acceptor in the catalytic mechanism.

The protein belongs to the protein kinase superfamily. Tyr protein kinase family.

The enzyme catalyses L-tyrosyl-[protein] + ATP = O-phospho-L-tyrosyl-[protein] + ADP + H(+). The sequence is that of Putative tyrosine-protein kinase C03B1.5 from Caenorhabditis elegans.